The sequence spans 109 residues: Large ribosomal subunit protein P1A (109 aa).

Residues 69-84 show a composition bias toward low complexity; it reads APVAGGAAAPAAADGE. The segment at 69 to 109 is disordered; the sequence is APVAGGAAAPAAADGEAPAEEKEEAKEEEESDEDMGFGLFD. Residues 94 to 103 show a composition bias toward acidic residues; the sequence is KEEEESDEDM.

The protein belongs to the eukaryotic ribosomal protein P1/P2 family. Component of the large ribosomal subunit (LSU). Mature yeast ribosomes consist of a small (40S) and a large (60S) subunit. The 40S small subunit contains 1 molecule of ribosomal RNA (18S rRNA) and at least 33 different proteins. The large 60S subunit contains 3 rRNA molecules (25S, 5.8S and 5S rRNA) and at least 46 different proteins. The acidic ribosomal P-proteins form the stalk structure of the 60S subunit. They are organized as a pentameric complex in which uL10/P0 interacts with 2 heterodimers of P1 and P2 proteins.

The protein resides in the cytoplasm. Component of the ribosome, a large ribonucleoprotein complex responsible for the synthesis of proteins in the cell. The small ribosomal subunit (SSU) binds messenger RNAs (mRNAs) and translates the encoded message by selecting cognate aminoacyl-transfer RNA (tRNA) molecules. The large subunit (LSU) contains the ribosomal catalytic site termed the peptidyl transferase center (PTC), which catalyzes the formation of peptide bonds, thereby polymerizing the amino acids delivered by tRNAs into a polypeptide chain. The nascent polypeptides leave the ribosome through a tunnel in the LSU and interact with protein factors that function in enzymatic processing, targeting, and the membrane insertion of nascent chains at the exit of the ribosomal tunnel. The chain is Large ribosomal subunit protein P1A (rpp101) from Schizosaccharomyces pombe (strain 972 / ATCC 24843) (Fission yeast).